The following is a 515-amino-acid chain: Phospholipase A1-Igamma1, chloroplastic (515 aa).

The transit peptide at 1–44 directs the protein to the chloroplast; sequence MATIPSHNLRPHTTNQRTQYSLSFRPHFSRSTLITFPARSSPAR. A GXSXG motif is present at residues 301 to 305; the sequence is GHSLG. Serine 303 acts as the Acyl-ester intermediate in catalysis. Active-site charge relay system residues include aspartate 366 and histidine 422.

The protein belongs to the AB hydrolase superfamily. Lipase family. In terms of tissue distribution, ubiquitous. Highly expressed in leaves.

It localises to the plastid. The protein resides in the chloroplast. The catalysed reaction is 1,2-dihexadecanoyl-sn-glycero-3-phosphocholine + H2O = 2-hexadecanoyl-sn-glycero-3-phosphocholine + hexadecanoate + H(+). It catalyses the reaction a 1,2-diacyl-3-O-(beta-D-galactosyl)-sn-glycerol + H2O = an acyl-3-O-(beta-D-galactosyl)-sn-glycerol + a fatty acid + H(+). It carries out the reaction a 1,2-diacyl-3-O-[alpha-D-galactosyl-(1-&gt;6)-beta-D-galactosyl]-sn-glycerol + H2O = acyl-3-O-[alpha-D-galactosyl-(1-&gt;6)-beta-D-galactosyl]-sn-glycerol + a fatty acid + H(+). Its function is as follows. Acylhydrolase with a broad specificity. Catalyzes the hydrolysis of phosphatidylcholine at the sn-1 position. Moderate activity toward phosphatidylcholine (PC), monogalactosyldiacylglycerol (MGDG), digalactosyldiacylglycerol (DGDG) and triacylglycerol (TAG). May display dual sn-1/sn-2 substrate specificity. Could be involved in early wound response. This Arabidopsis thaliana (Mouse-ear cress) protein is Phospholipase A1-Igamma1, chloroplastic.